The sequence spans 360 residues: Photosystem II protein D1 (360 aa).

The next 3 membrane-spanning stretches (helical) occupy residues 30–47, 119–134, and 143–157; these read YVGW…AATT, HFLI…QWEL, and WICV…AAFA. His119 serves as a coordination point for chlorophyll a. Tyr127 lines the pheophytin a pocket. Residues Asp171 and Glu190 each contribute to the [CaMn4O5] cluster site. Residues 198–219 form a helical membrane-spanning segment; that stretch reads FHMAGVAGMFGGALFSAMHGSL. Residue His199 coordinates chlorophyll a. A quinone contacts are provided by residues His216 and 265 to 266; that span reads SF. Residue His216 participates in Fe cation binding. His273 serves as a coordination point for Fe cation. Residues 275–289 traverse the membrane as a helical segment; that stretch reads FLASWPVICVWLTSM. Residues His333, Glu334, Asp343, and Ala345 each coordinate [CaMn4O5] cluster. The propeptide occupies 346-360; the sequence is AAESTSVALVAPAIG.

Belongs to the reaction center PufL/M/PsbA/D family. PSII is composed of 1 copy each of membrane proteins PsbA, PsbB, PsbC, PsbD, PsbE, PsbF, PsbH, PsbI, PsbJ, PsbK, PsbL, PsbM, PsbT, PsbX, PsbY, Psb30/Ycf12, peripheral proteins PsbO, CyanoQ (PsbQ), PsbU, PsbV and a large number of cofactors. It forms dimeric complexes. The cofactor is The D1/D2 heterodimer binds P680, chlorophylls that are the primary electron donor of PSII, and subsequent electron acceptors. It shares a non-heme iron and each subunit binds pheophytin, quinone, additional chlorophylls, carotenoids and lipids. D1 provides most of the ligands for the Mn4-Ca-O5 cluster of the oxygen-evolving complex (OEC). There is also a Cl(-1) ion associated with D1 and D2, which is required for oxygen evolution. The PSII complex binds additional chlorophylls, carotenoids and specific lipids.. Post-translationally, tyr-162 forms a radical intermediate that is referred to as redox-active TyrZ, YZ or Y-Z. C-terminally processed by CtpA; processing is essential to allow assembly of the oxygen-evolving complex and thus photosynthetic growth.

The protein localises to the cellular thylakoid membrane. It carries out the reaction 2 a plastoquinone + 4 hnu + 2 H2O = 2 a plastoquinol + O2. Functionally, photosystem II (PSII) is a light-driven water:plastoquinone oxidoreductase that uses light energy to abstract electrons from H(2)O, generating O(2) and a proton gradient subsequently used for ATP formation. It consists of a core antenna complex that captures photons, and an electron transfer chain that converts photonic excitation into a charge separation. The D1/D2 (PsbA/PsbD) reaction center heterodimer binds P680, the primary electron donor of PSII as well as several subsequent electron acceptors. The polypeptide is Photosystem II protein D1 (Prochlorococcus marinus (strain NATL1A)).